A 252-amino-acid polypeptide reads, in one-letter code: Triosephosphate isomerase (252 aa).

Substrate is bound at residue 10–12 (NWK). The active-site Electrophile is H96. Catalysis depends on E168, which acts as the Proton acceptor. Substrate is bound by residues G174, S214, and 235–236 (GG).

Belongs to the triosephosphate isomerase family. In terms of assembly, homodimer.

It localises to the cytoplasm. It carries out the reaction D-glyceraldehyde 3-phosphate = dihydroxyacetone phosphate. It participates in carbohydrate biosynthesis; gluconeogenesis. It functions in the pathway carbohydrate degradation; glycolysis; D-glyceraldehyde 3-phosphate from glycerone phosphate: step 1/1. Functionally, involved in the gluconeogenesis. Catalyzes stereospecifically the conversion of dihydroxyacetone phosphate (DHAP) to D-glyceraldehyde-3-phosphate (G3P). This Lactococcus lactis subsp. lactis (strain IL1403) (Streptococcus lactis) protein is Triosephosphate isomerase.